The chain runs to 318 residues: MKNLNLVALPHFVSVENLKNDEVKALIKRAEYFKKGGAVARLTSPVYVTNMFFEDSSRTHTSFEMAERKLGLTVIPFDPAHSSVNKGETLYDTSLVMNALGIDLEVIRHSQNEYYEDLINLKQHQKLNIGVINAGDGSGQHPSQCMLDMMTIHEHFGHFKGLKVAIVGDITNSRVAKSDMELLTKLGAEVYFSGPECWYSEEFDQYGKHEELDKLIPKMDVMMLLRVQHERHSGDPNEKKFDAHRYHEKYGINHKRYEAMKKDAIIMHPGPINHNVELSGDLVESDKCMFVRQMENGVFMRMAMLEAVLRGRKLGGLE.

Carbamoyl phosphate contacts are provided by Arg58 and Thr59. Lys86 contacts L-aspartate. Positions 108, 141, and 144 each coordinate carbamoyl phosphate. Arg174 and Arg226 together coordinate L-aspartate. Positions 270 and 271 each coordinate carbamoyl phosphate.

This sequence belongs to the aspartate/ornithine carbamoyltransferase superfamily. ATCase family. In terms of assembly, heterododecamer (2C3:3R2) of six catalytic PyrB chains organized as two trimers (C3), and six regulatory PyrI chains organized as three dimers (R2).

It catalyses the reaction carbamoyl phosphate + L-aspartate = N-carbamoyl-L-aspartate + phosphate + H(+). Its pathway is pyrimidine metabolism; UMP biosynthesis via de novo pathway; (S)-dihydroorotate from bicarbonate: step 2/3. Catalyzes the condensation of carbamoyl phosphate and aspartate to form carbamoyl aspartate and inorganic phosphate, the committed step in the de novo pyrimidine nucleotide biosynthesis pathway. This Lactobacillus delbrueckii subsp. bulgaricus (strain ATCC 11842 / DSM 20081 / BCRC 10696 / JCM 1002 / NBRC 13953 / NCIMB 11778 / NCTC 12712 / WDCM 00102 / Lb 14) protein is Aspartate carbamoyltransferase catalytic subunit.